Here is a 494-residue protein sequence, read N- to C-terminus: Guanosine-5'-triphosphate,3'-diphosphate pyrophosphatase (494 aa).

Belongs to the GppA/Ppx family. GppA subfamily.

It carries out the reaction guanosine 3'-diphosphate 5'-triphosphate + H2O = guanosine 3',5'-bis(diphosphate) + phosphate + H(+). It functions in the pathway purine metabolism; ppGpp biosynthesis; ppGpp from GTP: step 2/2. In terms of biological role, catalyzes the conversion of pppGpp to ppGpp. Guanosine pentaphosphate (pppGpp) is a cytoplasmic signaling molecule which together with ppGpp controls the 'stringent response', an adaptive process that allows bacteria to respond to amino acid starvation, resulting in the coordinated regulation of numerous cellular activities. The polypeptide is Guanosine-5'-triphosphate,3'-diphosphate pyrophosphatase (Escherichia coli O6:H1 (strain CFT073 / ATCC 700928 / UPEC)).